Here is a 225-residue protein sequence, read N- to C-terminus: Ureidoacrylate amidohydrolase RutB (225 aa).

Aspartate 22 (proton acceptor) is an active-site residue. Lysine 131 is a catalytic residue. Catalysis depends on cysteine 164, which acts as the Nucleophile.

Belongs to the isochorismatase family. RutB subfamily.

It carries out the reaction (Z)-3-ureidoacrylate + H2O + H(+) = (Z)-3-aminoacrylate + NH4(+) + CO2. The enzyme catalyses (Z)-3-ureidoacrylate + H2O = (Z)-3-aminoacrylate + carbamate + H(+). The catalysed reaction is (Z)-2-methylureidoacrylate + H2O + H(+) = (Z)-2-methylaminoacrylate + NH4(+) + CO2. Functionally, hydrolyzes ureidoacrylate to form aminoacrylate and carbamate. The carbamate hydrolyzes spontaneously, thereby releasing one of the nitrogen atoms of the pyrimidine ring as ammonia and one of its carbon atoms as CO2. The protein is Ureidoacrylate amidohydrolase RutB of Caulobacter vibrioides (strain ATCC 19089 / CIP 103742 / CB 15) (Caulobacter crescentus).